The primary structure comprises 108 residues: Protein translation factor SUI1 (108 aa).

Residues 1–20 are disordered; sequence MSIENLKSFDPFADTGDDEA.

The protein belongs to the SUI1 family.

Its function is as follows. Additional factor that functions in concert with eIF-2 and the initiator tRNA in directing the ribosome to the proper start site of translation. The polypeptide is Protein translation factor SUI1 (SUI1A) (Eremothecium gossypii (strain ATCC 10895 / CBS 109.51 / FGSC 9923 / NRRL Y-1056) (Yeast)).